The following is a 611-amino-acid chain: Procollagen galactosyltransferase 1-A (611 aa).

An N-terminal signal peptide occupies residues 1–24 (MSQAGVDRLLRGLQLLLLVLRLSA). N-linked (GlcNAc...) asparagine glycans are attached at residues Asn-85, Asn-173, Asn-312, Asn-370, and Asn-568. The span at 575–591 (WDRAKSRKTQQQEKLRS) shows a compositional bias: basic and acidic residues. The disordered stretch occupies residues 575 to 611 (WDRAKSRKTQQQEKLRSEALNSPSLGSPFDNTARDEL). Residues 608 to 611 (RDEL) carry the Prevents secretion from ER motif.

This sequence belongs to the glycosyltransferase 25 family.

The protein resides in the endoplasmic reticulum lumen. The enzyme catalyses (5R)-5-hydroxy-L-lysyl-[collagen] + UDP-alpha-D-galactose = (5R)-5-O-(beta-D-galactosyl)-5-hydroxy-L-lysyl-[collagen] + UDP + H(+). Beta-galactosyltransferase that transfers beta-galactose to hydroxylysine residues of type I collagen. By acting on collagen glycosylation, facilitates the formation of collagen triple helix. The polypeptide is Procollagen galactosyltransferase 1-A (colgalt1-a) (Xenopus laevis (African clawed frog)).